Reading from the N-terminus, the 747-residue chain is Endoglucanase C (747 aa).

A signal peptide spans 1-37 (MGHVTSPSKRYPASFKRAGSILGVSIALAAFSNVAAA). The 99-residue stretch at 38-136 (GCEYVVTNSW…TVNGAACTGG (99 aa)) folds into the CBM2 domain. Intrachain disulfides connect C39/C133, C183/C214, and C193/C208. The 30-residue stretch at 182–211 (QCNWYGTLYPLCVSTTSGWGYENNRSCISP) folds into the CBM10 domain. Residues 226–283 (GSSSPSSISSSSVRSSSSSSVVPPSSSSSSSVPSSSSSSVSSSSVVSSSSSSVSVPGT) form a disordered region. The segment covering 227-281 (SSSPSSISSSSVRSSSSSSVVPPSSSSSSSVPSSSSSSVSSSSVVSSSSSSVSVP) has biased composition (low complexity). Residues 280–747 (VPGTGVFRVN…TQLLHNMWGL (468 aa)) form a catalytic region. E502 serves as the catalytic Proton donor. E652 acts as the Nucleophile in catalysis.

It belongs to the glycosyl hydrolase 5 (cellulase A) family.

It catalyses the reaction Endohydrolysis of (1-&gt;4)-beta-D-glucosidic linkages in cellulose, lichenin and cereal beta-D-glucans.. The polypeptide is Endoglucanase C (celC) (Cellvibrio japonicus (strain Ueda107) (Pseudomonas fluorescens subsp. cellulosa)).